Consider the following 306-residue polypeptide: Pyridoxal 5'-phosphate synthase subunit PdxS (306 aa).

Residue Asp36 participates in D-ribose 5-phosphate binding. Catalysis depends on Lys93, which acts as the Schiff-base intermediate with D-ribose 5-phosphate. Gly165 contributes to the D-ribose 5-phosphate binding site. Arg177 contributes to the D-glyceraldehyde 3-phosphate binding site. D-ribose 5-phosphate is bound by residues Gly226 and 247 to 248 (GS).

Belongs to the PdxS/SNZ family. In the presence of PdxT, forms a dodecamer of heterodimers.

The catalysed reaction is aldehydo-D-ribose 5-phosphate + D-glyceraldehyde 3-phosphate + L-glutamine = pyridoxal 5'-phosphate + L-glutamate + phosphate + 3 H2O + H(+). The protein operates within cofactor biosynthesis; pyridoxal 5'-phosphate biosynthesis. Catalyzes the formation of pyridoxal 5'-phosphate from ribose 5-phosphate (RBP), glyceraldehyde 3-phosphate (G3P) and ammonia. The ammonia is provided by the PdxT subunit. Can also use ribulose 5-phosphate and dihydroxyacetone phosphate as substrates, resulting from enzyme-catalyzed isomerization of RBP and G3P, respectively. The protein is Pyridoxal 5'-phosphate synthase subunit PdxS of Salinispora tropica (strain ATCC BAA-916 / DSM 44818 / JCM 13857 / NBRC 105044 / CNB-440).